A 424-amino-acid polypeptide reads, in one-letter code: Putative chloroquine resistance transporter (424 aa).

At 1–56 the chain is on the cytoplasmic side; it reads MTVIKKGKNKKKNLKNDDRYKELDSLITNGSEIGDNSGRSCIKRFFKIIGNEMKNN. A helical membrane pass occupies residues 57–77; the sequence is VYVYFLSILYLCVCVMNKVFA. The Vacuolar portion of the chain corresponds to 78-88; sequence KRTLNKMGNYS. A glycan (N-linked (GlcNAc...) asparagine) is linked at Asn86. A helical transmembrane segment spans residues 89–109; it reads FVTSETHNIICIVVFQLLYFI. Topologically, residues 110 to 125 are cytoplasmic; it reads YRKTSTSGYKNESQKN. The chain crosses the membrane as a helical span at residues 126–146; the sequence is FGWQFFLISLLDASTVIISMI. The Vacuolar segment spans residues 147–156; it reads GLTRTTGNIQ. Residues 157–177 form a helical membrane-spanning segment; that stretch reads SFIMQLIIPVNMYFCFMFLGY. Over 178 to 180 the chain is Cytoplasmic; that stretch reads RYH. The helical transmembrane segment at 181–201 threads the bilayer; sequence LFNYLGAFIILITIAVVETFL. The Vacuolar portion of the chain corresponds to 202–209; that stretch reads SFETQSEN. The helical transmembrane segment at 210–230 threads the bilayer; that stretch reads SIIFNLIMISALIPLSFSNMT. The Cytoplasmic segment spans residues 231-248; sequence REVVFKKHKINILRLNAM. A helical membrane pass occupies residues 249 to 269; sequence VVLFQFFTSLLVLPVYNIPFL. The Vacuolar segment spans residues 270–317; that stretch reads KEIYMPFSEMSTNINNGLRCLFYGQNTVVENCGVGMVKMCDNCEGAWK. 2 disulfide bridges follow: Cys289–Cys312 and Cys301–Cys309. A helical membrane pass occupies residues 318 to 338; sequence TFITFSFFNICDNLLACYIID. Residues 339 to 346 lie on the Cytoplasmic side of the membrane; the sequence is KFSTMTYT. The helical transmembrane segment at 347–367 threads the bilayer; it reads IVSCIQGPAITIAYYFKFLAG. The Vacuolar portion of the chain corresponds to 368 to 377; that stretch reads DAVRKPRILD. A helical transmembrane segment spans residues 378-398; it reads FLTLFGYLFGTIIYRIGNIIL. The Cytoplasmic portion of the chain corresponds to 399–424; that stretch reads EKKKMVKSQNSNDSEAELTCIETSTA.

It belongs to the CRT-like transporter family.

It localises to the vacuole membrane. In terms of biological role, nutrient transporter. Involved in maintaining the osmotic homeostasis of the digestive vacuole. The protein is Putative chloroquine resistance transporter of Plasmodium yoelii yoelii.